The primary structure comprises 312 residues: Olfactory receptor 2L2 (312 aa).

At methionine 1–leucine 24 the chain is on the extracellular side. Asparagine 5 carries N-linked (GlcNAc...) asparagine glycosylation. A helical transmembrane segment spans residues phenylalanine 25–isoleucine 48. Residues phenylalanine 49 to threonine 56 are Cytoplasmic-facing. A helical membrane pass occupies residues proline 57–proline 78. The Extracellular segment spans residues lysine 79 to glutamine 99. A glycan (N-linked (GlcNAc...) asparagine) is linked at asparagine 88. A disulfide bridge links cysteine 96 with cysteine 188. A helical transmembrane segment spans residues serine 100 to tyrosine 119. At aspartate 120–arginine 138 the chain is on the cytoplasmic side. The chain crosses the membrane as a helical span at residues valine 139–alanine 157. Topologically, residues histidine 158–tyrosine 194 are extracellular. Residues glutamate 195–glycine 218 traverse the membrane as a helical segment. Over arginine 219–lysine 235 the chain is Cytoplasmic. The helical transmembrane segment at alanine 236–tyrosine 258 threads the bilayer. The Extracellular segment spans residues valine 259–lysine 271. The helical transmembrane segment at isoleucine 272–leucine 291 threads the bilayer. Topologically, residues arginine 292–methionine 312 are cytoplasmic.

Belongs to the G-protein coupled receptor 1 family.

The protein resides in the cell membrane. Its function is as follows. Odorant receptor. The protein is Olfactory receptor 2L2 (OR2L2) of Homo sapiens (Human).